A 55-amino-acid polypeptide reads, in one-letter code: MPQLNPNPWFFIMIISWLTYSMIIQPKILSFTSTNPPARKEPTTNTTTPWNWPWT.

The helical transmembrane segment at 7-24 threads the bilayer; it reads NPWFFIMIISWLTYSMII. The segment at 34–55 is disordered; sequence TNPPARKEPTTNTTTPWNWPWT. Residues 43–55 are compositionally biased toward low complexity; that stretch reads TTNTTTPWNWPWT.

The protein belongs to the ATPase protein 8 family. F-type ATPases have 2 components, CF(1) - the catalytic core - and CF(0) - the membrane proton channel.

Its subcellular location is the mitochondrion membrane. In terms of biological role, mitochondrial membrane ATP synthase (F(1)F(0) ATP synthase or Complex V) produces ATP from ADP in the presence of a proton gradient across the membrane which is generated by electron transport complexes of the respiratory chain. F-type ATPases consist of two structural domains, F(1) - containing the extramembraneous catalytic core and F(0) - containing the membrane proton channel, linked together by a central stalk and a peripheral stalk. During catalysis, ATP synthesis in the catalytic domain of F(1) is coupled via a rotary mechanism of the central stalk subunits to proton translocation. Part of the complex F(0) domain. Minor subunit located with subunit a in the membrane. The chain is ATP synthase protein 8 (MT-ATP8) from Vireo altiloquus (Black-whiskered vireo).